A 73-amino-acid polypeptide reads, in one-letter code: Putative sodium channel toxin Ts39 (73 aa).

A signal peptide spans 1-22 (MKTLNFCLFLVIISSLTVRVFC). Positions 24 to 73 (NDRFLTVNDNYVICLYINKSFVNCENLCKAYMNAKDGFCRQPHCFCTDVE) constitute an LCN-type CS-alpha/beta domain. Intrachain disulfides connect cysteine 37/cysteine 62, cysteine 47/cysteine 67, and cysteine 51/cysteine 69.

It belongs to the long (3 C-C) scorpion toxin superfamily. Sodium channel inhibitor family. In terms of tissue distribution, expressed by the venom gland.

It localises to the secreted. In terms of biological role, putative sodium channel toxin. The sequence is that of Putative sodium channel toxin Ts39 from Tityus serrulatus (Brazilian scorpion).